Consider the following 788-residue polypeptide: Endonuclease MutS2 (788 aa).

332-339 (GPNTGGKT) is an ATP binding site. The 76-residue stretch at 713-788 (VDLRGMDAEE…GTGVTVVELK (76 aa)) folds into the Smr domain.

The protein belongs to the DNA mismatch repair MutS family. MutS2 subfamily. Homodimer. Binds to stalled ribosomes, contacting rRNA.

In terms of biological role, endonuclease that is involved in the suppression of homologous recombination and thus may have a key role in the control of bacterial genetic diversity. Its function is as follows. Acts as a ribosome collision sensor, splitting the ribosome into its 2 subunits. Detects stalled/collided 70S ribosomes which it binds and splits by an ATP-hydrolysis driven conformational change. Acts upstream of the ribosome quality control system (RQC), a ribosome-associated complex that mediates the extraction of incompletely synthesized nascent chains from stalled ribosomes and their subsequent degradation. Probably generates substrates for RQC. This chain is Endonuclease MutS2, found in Clostridium botulinum (strain ATCC 19397 / Type A).